Consider the following 366-residue polypeptide: Endogenous Bornavirus-like nucleoprotein 1 (366 aa).

Polar residues predominate over residues 1 to 15 (MSRPRNNPQTSSPQD). Positions 1–22 (MSRPRNNPQTSSPQDSTKDGSS) are disordered.

As to expression, expression detected by RT-PCR in a few cell lines, including OL, HEK293T and MOLT-4. Not observed in HeLa cells.

May act as an RNA-binding protein. Highly homologous to the bornavirus nucleocapsid N protein that binds viral RNA and oligomerizes. The protein is Endogenous Bornavirus-like nucleoprotein 1 (EBLN1) of Homo sapiens (Human).